A 232-amino-acid polypeptide reads, in one-letter code: Orotate phosphoribosyltransferase (232 aa).

Residues arginine 107, lysine 108, lysine 111, histidine 113, and 133–141 (EDLTTAGGS) each bind 5-phospho-alpha-D-ribose 1-diphosphate. Threonine 137 contacts orotate.

The protein belongs to the purine/pyrimidine phosphoribosyltransferase family. PyrE subfamily. In terms of assembly, homodimer. The cofactor is Mg(2+).

The enzyme catalyses orotidine 5'-phosphate + diphosphate = orotate + 5-phospho-alpha-D-ribose 1-diphosphate. It participates in pyrimidine metabolism; UMP biosynthesis via de novo pathway; UMP from orotate: step 1/2. Catalyzes the transfer of a ribosyl phosphate group from 5-phosphoribose 1-diphosphate to orotate, leading to the formation of orotidine monophosphate (OMP). This chain is Orotate phosphoribosyltransferase, found in Rhizobium meliloti (strain 1021) (Ensifer meliloti).